Here is a 471-residue protein sequence, read N- to C-terminus: 3-isopropylmalate dehydratase large subunit (471 aa).

[4Fe-4S] cluster-binding residues include cysteine 347, cysteine 407, and cysteine 410.

Belongs to the aconitase/IPM isomerase family. LeuC type 1 subfamily. In terms of assembly, heterodimer of LeuC and LeuD. [4Fe-4S] cluster is required as a cofactor.

The catalysed reaction is (2R,3S)-3-isopropylmalate = (2S)-2-isopropylmalate. It participates in amino-acid biosynthesis; L-leucine biosynthesis; L-leucine from 3-methyl-2-oxobutanoate: step 2/4. In terms of biological role, catalyzes the isomerization between 2-isopropylmalate and 3-isopropylmalate, via the formation of 2-isopropylmaleate. The protein is 3-isopropylmalate dehydratase large subunit of Vibrio parahaemolyticus serotype O3:K6 (strain RIMD 2210633).